We begin with the raw amino-acid sequence, 1278 residues long: NPC intracellular cholesterol transporter 1 (1278 aa).

The N-terminal stretch at 1–22 is a signal peptide; it reads MTARGLALGLLLLLLCPAQVFS. Topologically, residues 23 to 261 are lumenal; sequence QSCVWYGECG…QPPPPPAPWT (239 aa). 9 cysteine pairs are disulfide-bonded: C25–C74, C31–C42, C63–C109, C75–C113, C97–C238, C100–C160, C177–C184, C227–C243, and C240–C247. Cholesterol is bound at residue N41. N70 carries an N-linked (GlcNAc...) asparagine glycan. Q79 contacts cholesterol. N-linked (GlcNAc...) asparagine glycans are attached at residues N122 and N135. A glycan (N-linked (GlcNAc...) asparagine; atypical) is linked at N158. The segment at 175-205 is important for cholesterol binding and cholesterol transfer from NPC1 to liposomes; sequence LLCGKDADACNATNWIEYMFNKDNGQAPFTI. 2 N-linked (GlcNAc...) asparagine glycosylation sites follow: N185 and N222. The chain crosses the membrane as a helical span at residues 262–282; the sequence is ILGLDAMYVIMWITYMAFLLV. Residues 283 to 350 lie on the Cytoplasmic side of the membrane; the sequence is FFGAFFAVWC…RWGSFCVRNP (68 aa). The helical transmembrane segment at 351-371 threads the bilayer; sequence GCVIFFSLVFITACSSGLVFV. The Lumenal segment spans residues 372–620; that stretch reads RVTTNPVDLW…DELNRESDSD (249 aa). 7 N-linked (GlcNAc...) asparagine glycosylation sites follow: N452, N459, N478, N524, N557, N572, and N598. 2 disulfide bridges follow: C468/C479 and C516/C533. Residues 620–785 enclose the SSD domain; it reads DVFTVVISYA…ITCFVSLLGL (166 aa). Residues 621–641 form a helical membrane-spanning segment; sequence VFTVVISYAIMFLYISLALGH. Over 642–653 the chain is Cytoplasmic; the sequence is MKSCRRLLVDSK. A helical transmembrane segment spans residues 654–675; that stretch reads VSLGIAGILIVLSSVACSLGVF. The Lumenal segment spans residues 676–685; that stretch reads SYIGLPLTLI. A helical membrane pass occupies residues 686-706; that stretch reads VIEVIPFLVLAVGVDNIFILV. Residues 707 to 730 are Cytoplasmic-facing; the sequence is QAYQRDERLQGETLDQQLGRVLGE. Residues 731 to 751 form a helical membrane-spanning segment; that stretch reads VAPSMFLSSFSETVAFFLGAL. Residues 752 to 759 are Lumenal-facing; that stretch reads SVMPAVHT. The helical transmembrane segment at 760-783 threads the bilayer; sequence FSLFAGLAVFIDFLLQITCFVSLL. Residues 784-832 are Cytoplasmic-facing; it reads GLDIKRQEKNRLDIFCCVRGAEDGTSVQASESCLFRFFKNSYSPLLLKD. The helical transmembrane segment at 833-853 threads the bilayer; it reads WMRPIVIAIFVGVLSFSIAVL. The Lumenal segment spans residues 854-1097; sequence NKVDIGLDQS…YEQYLTIIDD (244 aa). An intrachain disulfide couples C909 to C914. N-linked (GlcNAc...) asparagine glycosylation is found at N916, N931, N961, N968, N1064, and N1072. 3 cysteine pairs are disulfide-bonded: C956–C1011, C957–C979, and C967–C976. The helical transmembrane segment at 1098 to 1118 threads the bilayer; that stretch reads TIFNLGVSLGAIFLVTMVLLG. Topologically, residues 1119-1124 are cytoplasmic; sequence CELWSA. Residues 1125-1145 form a helical membrane-spanning segment; sequence VIMCATIAMVLVNMFGVMWLW. At 1146–1150 the chain is on the lumenal side; the sequence is GISLN. The helical transmembrane segment at 1151-1171 threads the bilayer; it reads AVSLVNLVMSCGISVEFCSHI. Topologically, residues 1172 to 1194 are cytoplasmic; it reads TRAFTVSMKGSRVERAEEALAHM. Residues 1195–1215 form a helical membrane-spanning segment; that stretch reads GSSVFSGITLTKFGGIVVLAF. Topologically, residues 1216-1223 are lumenal; sequence AKSQIFQI. A helical membrane pass occupies residues 1224–1244; it reads FYFRMYLAMVLLGATHGLIFL. Over 1245-1278 the chain is Cytoplasmic; sequence PVLLSYIGPSVNKAKSCATEERYKGTERERLLNF. The required for location in lysosomes stretch occupies residues 1275-1278; sequence LLNF. Residues 1275-1278 carry the Di-leucine motif motif; that stretch reads LLNF.

It belongs to the patched family. In terms of assembly, interacts (via the second lumenal domain) with NPC2. Interacts with TMEM97; the interaction may decrease NPC1 availability to the cell. Interacts with TIM1. Interacts with SLC38A9; this interaction inhibits cholesterol-mediated mTORC1 activation via its sterol transport activity. As to quaternary structure, (Microbial infection) Interacts with ebolavirus glycoprotein. In terms of processing, N-glycosylated.

Its subcellular location is the late endosome membrane. The protein resides in the lysosome membrane. The enzyme catalyses cholesterol(in) = cholesterol(out). Intracellular cholesterol transporter which acts in concert with NPC2 and plays an important role in the egress of cholesterol from the endosomal/lysosomal compartment. Unesterified cholesterol that has been released from LDLs in the lumen of the late endosomes/lysosomes is transferred by NPC2 to the cholesterol-binding pocket in the N-terminal domain of NPC1. Cholesterol binds to NPC1 with the hydroxyl group buried in the binding pocket. Binds oxysterol with higher affinity than cholesterol. May play a role in vesicular trafficking in glia, a process that may be crucial for maintaining the structural and functional integrity of nerve terminals. Inhibits cholesterol-mediated mTORC1 activation throught its interaction with SLC38A9. Its function is as follows. (Microbial infection) Acts as an endosomal entry receptor for ebolavirus. This Homo sapiens (Human) protein is NPC intracellular cholesterol transporter 1.